Here is a 498-residue protein sequence, read N- to C-terminus: Hexokinase-1 (498 aa).

A helical membrane pass occupies residues 4–24; it reads VTVGAAVVGAAAVCAVAALIV. One can recognise a Hexokinase domain in the interval 35-488; it reads GRAMAILREF…SGIGAALLRA (454 aa). The hexokinase small subdomain stretch occupies residues 89-228; sequence QLVMKLGVFY…VLDMRVSALV (140 aa). Positions 104, 105, and 106 each coordinate ADP. The D-glucose site is built by Thr194, Lys195, Asn229, and Asp230. Positions 229–477 are hexokinase large subdomain; the sequence is NDTVGTLAGG…TSIVFVHSND (249 aa). Residue Thr253 participates in ADP binding. Asn256, Glu284, and Glu315 together coordinate D-glucose. Residue Gly442 participates in ADP binding.

This sequence belongs to the hexokinase family. In terms of tissue distribution, expressed in young and mature leaves, stems, roots, stolons, and developing and mature tubers.

It is found in the plastid. The protein localises to the chloroplast outer membrane. It catalyses the reaction a D-hexose + ATP = a D-hexose 6-phosphate + ADP + H(+). It carries out the reaction D-fructose + ATP = D-fructose 6-phosphate + ADP + H(+). The catalysed reaction is D-glucose + ATP = D-glucose 6-phosphate + ADP + H(+). It participates in carbohydrate metabolism; hexose metabolism. The protein operates within carbohydrate degradation; glycolysis; D-glyceraldehyde 3-phosphate and glycerone phosphate from D-glucose: step 1/4. Fructose and glucose phosphorylating enzyme. May be involved in the phosphorylation of glucose during the export from plastids to cytosol. Seems neither to be involved in cell sugar sensing nor in carbohydrate metabolism in tuber. The polypeptide is Hexokinase-1 (HXK1) (Solanum tuberosum (Potato)).